We begin with the raw amino-acid sequence, 242 residues long: Uridylate kinase (242 aa).

11-14 (KLSG) contacts ATP. The segment at 19–24 (GEKGVG) is involved in allosteric activation by GTP. Glycine 53 is a binding site for UMP. ATP is bound by residues glycine 54 and arginine 58. UMP contacts are provided by residues aspartate 73 and 134 to 141 (IGSPYFST). Positions 162, 168, and 171 each coordinate ATP.

Belongs to the UMP kinase family. In terms of assembly, homohexamer.

Its subcellular location is the cytoplasm. The catalysed reaction is UMP + ATP = UDP + ADP. It functions in the pathway pyrimidine metabolism; CTP biosynthesis via de novo pathway; UDP from UMP (UMPK route): step 1/1. Its activity is regulated as follows. Allosterically activated by GTP. Inhibited by UTP. In terms of biological role, catalyzes the reversible phosphorylation of UMP to UDP. This chain is Uridylate kinase, found in Streptococcus pyogenes serotype M1.